The primary structure comprises 849 residues: Envelope glycoprotein gp160 (849 aa).

Positions 1–31 are cleaved as a signal peptide; it reads MRVKGIQRNWQHLWKWGTLILGLVIICSASD. Residues 32 to 670 lie on the Extracellular side of the membrane; sequence NLWVTVYYGV…ISNWLWYIRI (639 aa). A disulfide bridge connects residues cysteine 53 and cysteine 73. 17 N-linked (GlcNAc...) asparagine; by host glycosylation sites follow: asparagine 87, asparagine 129, asparagine 137, asparagine 142, asparagine 153, asparagine 185, asparagine 195, asparagine 232, asparagine 239, asparagine 260, asparagine 274, asparagine 287, asparagine 299, asparagine 329, asparagine 341, asparagine 354, and asparagine 358. 5 cysteine pairs are disulfide-bonded: cysteine 118–cysteine 203, cysteine 125–cysteine 194, cysteine 130–cysteine 154, cysteine 216–cysteine 245, and cysteine 226–cysteine 237. The segment at 130-153 is V1; it reads CTNVNSANHTEANNTVENKEEIKN. The interval 154–194 is V2; sequence CSFKITTERGGKKKEEYALFYKLDVVPISNGNKTSYRLIHC. The V3 stretch occupies residues 294-327; the sequence is CIRPNNNTRKSIPIGPGQAFYATGDIIGDIRQAH. Cysteine 294 and cysteine 328 are disulfide-bonded. The tract at residues 360–370 is CD4-binding loop; it reads SAGGDLEITTH. 2 disulfide bridges follow: cysteine 374–cysteine 430 and cysteine 381–cysteine 403. The interval 381-403 is V4; it reads CNTSGLFNNNISNINNETITLPC. Residues asparagine 382, asparagine 390, asparagine 396, asparagine 433, and asparagine 447 are each glycosylated (N-linked (GlcNAc...) asparagine; by host). V5 stretches follow at residues 446–457 and 448–457; these read NNDSTEETFRPG and DSTEETFRPG. The tract at residues 498–518 is fusion peptide; sequence AVGLGAVFLGFLGAAGSTMGA. Residues 560-578 are immunosuppression; that stretch reads KQLQSRVLAIERYLKDQQL. A disulfide bridge links cysteine 584 with cysteine 590. N-linked (GlcNAc...) asparagine; by host glycosylation is found at asparagine 597, asparagine 602, asparagine 611, and asparagine 623. Residues 619–653 are a coiled coil; the sequence is REIHNYTQHIYSLIEESQNQQEKNEQDLLALDKWA. Positions 648 to 669 are MPER; binding to GalCer; the sequence is ALDKWASLWNWFDISNWLWYIR. A helical membrane pass occupies residues 671 to 691; the sequence is FIMIVGGLIGLRIVFAVLSIV. Residues 692–849 are Cytoplasmic-facing; it reads NRVRQGYSPL…IRQGLERALL (158 aa). A YXXL motif; contains endocytosis signal motif is present at residues 698 to 701; that stretch reads YSPL. The interval 709-729 is disordered; the sequence is HQREPDRLGKTEEGGGEQDRD. Cysteine 750 is lipidated: S-palmitoyl cysteine; by host. Residues 848–849 carry the Di-leucine internalization motif motif; the sequence is LL.

The protein belongs to the HIV-1 env protein family. As to quaternary structure, the mature envelope protein (Env) consists of a homotrimer of non-covalently associated gp120-gp41 heterodimers. The resulting complex protrudes from the virus surface as a spike. There seems to be as few as 10 spikes on the average virion. Interacts with host CD4, CCR5 and CXCR4. Gp120 also interacts with the C-type lectins CD209/DC-SIGN and CLEC4M/DC-SIGNR (collectively referred to as DC-SIGN(R)). Gp120 and gp41 interact with GalCer. Gp120 interacts with host ITGA4/ITGB7 complex; on CD4+ T-cells, this interaction results in rapid activation of integrin ITGAL/LFA-1, which facilitates efficient cell-to-cell spreading of HIV-1. Gp120 interacts with cell-associated heparan sulfate; this interaction increases virus infectivity on permissive cells and may be involved in infection of CD4- cells. The mature envelope protein (Env) consists of a homotrimer of non-covalently associated gp120-gp41 heterodimers. The resulting complex protrudes from the virus surface as a spike. There seems to be as few as 10 spikes on the average virion. In terms of processing, highly glycosylated by host. The high number of glycan on the protein is reffered to as 'glycan shield' because it contributes to hide protein sequence from adaptive immune system. Post-translationally, palmitoylation of the transmembrane protein and of Env polyprotein (prior to its proteolytic cleavage) is essential for their association with host cell membrane lipid rafts. Palmitoylation is therefore required for envelope trafficking to classical lipid rafts, but not for viral replication. Specific enzymatic cleavages in vivo yield mature proteins. Envelope glycoproteins are synthesized as an inactive precursor that is heavily N-glycosylated and processed likely by host cell furin in the Golgi to yield the mature SU and TM proteins. The cleavage site between SU and TM requires the minimal sequence [KR]-X-[KR]-R. About 2 of the 9 disulfide bonds of gp41 are reduced by P4HB/PDI, following binding to CD4 receptor.

Its subcellular location is the virion membrane. It localises to the host cell membrane. The protein localises to the host endosome membrane. Functionally, oligomerizes in the host endoplasmic reticulum into predominantly trimers. In a second time, gp160 transits in the host Golgi, where glycosylation is completed. The precursor is then proteolytically cleaved in the trans-Golgi and thereby activated by cellular furin or furin-like proteases to produce gp120 and gp41. In terms of biological role, attaches the virus to the host lymphoid cell by binding to the primary receptor CD4. This interaction induces a structural rearrangement creating a high affinity binding site for a chemokine coreceptor like CXCR4 and/or CCR5. Acts as a ligand for CD209/DC-SIGN and CLEC4M/DC-SIGNR, which are respectively found on dendritic cells (DCs), and on endothelial cells of liver sinusoids and lymph node sinuses. These interactions allow capture of viral particles at mucosal surfaces by these cells and subsequent transmission to permissive cells. HIV subverts the migration properties of dendritic cells to gain access to CD4+ T-cells in lymph nodes. Virus transmission to permissive T-cells occurs either in trans (without DCs infection, through viral capture and transmission), or in cis (following DCs productive infection, through the usual CD4-gp120 interaction), thereby inducing a robust infection. In trans infection, bound virions remain infectious over days and it is proposed that they are not degraded, but protected in non-lysosomal acidic organelles within the DCs close to the cell membrane thus contributing to the viral infectious potential during DCs' migration from the periphery to the lymphoid tissues. On arrival at lymphoid tissues, intact virions recycle back to DCs' cell surface allowing virus transmission to CD4+ T-cells. Acts as a class I viral fusion protein. Under the current model, the protein has at least 3 conformational states: pre-fusion native state, pre-hairpin intermediate state, and post-fusion hairpin state. During fusion of viral and target intracellular membranes, the coiled coil regions (heptad repeats) assume a trimer-of-hairpins structure, positioning the fusion peptide in close proximity to the C-terminal region of the ectodomain. The formation of this structure appears to drive apposition and subsequent fusion of viral and target cell membranes. Complete fusion occurs in host cell endosomes and is dynamin-dependent, however some lipid transfer might occur at the plasma membrane. The virus undergoes clathrin-dependent internalization long before endosomal fusion, thus minimizing the surface exposure of conserved viral epitopes during fusion and reducing the efficacy of inhibitors targeting these epitopes. Membranes fusion leads to delivery of the nucleocapsid into the cytoplasm. This chain is Envelope glycoprotein gp160, found in Human immunodeficiency virus type 1 group M subtype G (isolate 92NG083) (HIV-1).